Reading from the N-terminus, the 273-residue chain is 4-hydroxy-tetrahydrodipicolinate reductase (273 aa).

Residues 11-16 (GALGRM) and 106-108 (GTT) each bind NAD(+). Residue His-162 is the Proton donor/acceptor of the active site. His-163 contributes to the (S)-2,3,4,5-tetrahydrodipicolinate binding site. Catalysis depends on Lys-166, which acts as the Proton donor. 172–173 (GT) is a binding site for (S)-2,3,4,5-tetrahydrodipicolinate.

It belongs to the DapB family.

Its subcellular location is the cytoplasm. The catalysed reaction is (S)-2,3,4,5-tetrahydrodipicolinate + NAD(+) + H2O = (2S,4S)-4-hydroxy-2,3,4,5-tetrahydrodipicolinate + NADH + H(+). It carries out the reaction (S)-2,3,4,5-tetrahydrodipicolinate + NADP(+) + H2O = (2S,4S)-4-hydroxy-2,3,4,5-tetrahydrodipicolinate + NADPH + H(+). Its pathway is amino-acid biosynthesis; L-lysine biosynthesis via DAP pathway; (S)-tetrahydrodipicolinate from L-aspartate: step 4/4. Catalyzes the conversion of 4-hydroxy-tetrahydrodipicolinate (HTPA) to tetrahydrodipicolinate. This chain is 4-hydroxy-tetrahydrodipicolinate reductase, found in Synechococcus sp. (strain RCC307).